A 550-amino-acid polypeptide reads, in one-letter code: MFCVQCEQTIRTPAGNGCSYAQGMCGKTAETSDLQDLLIAALQGLSAWAVKAREYGIINHDVDNFAPRAFFSTLTNVNFDSPRIVGYAREAIALREALKAQCLSVDANAHCDNPMADLQLVSDDLGELQRQAAEFTPNKDKAAIGENILGLRLLCLYGLKGAAAYMEHAHVLGQYDNDIYAQYHKIMAWLGTWPADMNALLECAMEIGQMNFKVMSILDAGETTKYGHPTPTQVNVKATEGKCILISGHDLKDLYNLLEQTEGTGVNVYTHGEMLPAHGYPELRKFKHLVGNYGSGWQNQQVEFARFPGPIVMTSNCIIDPTVGSYDDRIWTRSIVGWPGVSHLEGDDFGPVIAQAQQMAGFPYSEIPHLITVGFGRQTLLGAADTLIDLVSREKLRHIFLVGGCDGARGERNYFTDFATSVPDDCLILTLACGKYRFNKLEFGDIEGLPRLVDAGQCNDAYSAIILAVTLAEKLGCGVNDLPLSLVLSWFEQKAIVILLTLLSLGVKNIVTGPTAPGFFTPDLLAVLNEKFGLRSVTTVEEDMKQLLSA.

[2Fe-2S] cluster contacts are provided by Cys3, Cys6, Cys18, and Cys25. The hybrid [4Fe-2O-2S] cluster site is built by His249, Glu273, Cys317, Cys405, Cys433, Cys458, Glu492, and Lys494. At Cys405 the chain carries Cysteine persulfide.

It belongs to the HCP family. [2Fe-2S] cluster is required as a cofactor. Requires hybrid [4Fe-2O-2S] cluster as cofactor.

The protein resides in the cytoplasm. It carries out the reaction A + NH4(+) + H2O = hydroxylamine + AH2 + H(+). Functionally, catalyzes the reduction of hydroxylamine to form NH(3) and H(2)O. In Salmonella enteritidis PT4 (strain P125109), this protein is Hydroxylamine reductase.